We begin with the raw amino-acid sequence, 194 residues long: MSEIKLIVGLGNPGDKYTDTRHNAGEWLIERLARRFNVSLNPESKFFGKTARTLVNGKEVRLLVPTTFMNLSGKAVGALASFYRIKPEEILVIHDELDLPPGTAKLKQGGGHGGHNGLKDIVAQLGNNNNFYRLRIGIGHPGHRDLVAGYVLNKPSPADRDALEKVLDEATDCVEMIFRDGMVKATNRLNSFKI.

Residue Tyr17 coordinates tRNA. Catalysis depends on His22, which acts as the Proton acceptor. TRNA contacts are provided by Phe68, Asn70, and Asn116.

Belongs to the PTH family. As to quaternary structure, monomer.

It localises to the cytoplasm. The enzyme catalyses an N-acyl-L-alpha-aminoacyl-tRNA + H2O = an N-acyl-L-amino acid + a tRNA + H(+). Functionally, hydrolyzes ribosome-free peptidyl-tRNAs (with 1 or more amino acids incorporated), which drop off the ribosome during protein synthesis, or as a result of ribosome stalling. Catalyzes the release of premature peptidyl moieties from peptidyl-tRNA molecules trapped in stalled 50S ribosomal subunits, and thus maintains levels of free tRNAs and 50S ribosomes. The polypeptide is Peptidyl-tRNA hydrolase (Haemophilus influenzae (strain ATCC 51907 / DSM 11121 / KW20 / Rd)).